The sequence spans 130 residues: MRHRKSGRHLSRTSAHRKAMFQNMAVSLFEHELIKTTLPKAKELRRVAEPLITLAKEDSVANRRLAFDRTRSKAAVGKLFNDLGKRYANRPGGYLRILKCGFRAGDNAPMAYVELVDRPVDGEALVGAAE.

It belongs to the bacterial ribosomal protein bL17 family. In terms of assembly, part of the 50S ribosomal subunit. Contacts protein L32.

The protein is Large ribosomal subunit protein bL17 of Azotobacter vinelandii (strain DJ / ATCC BAA-1303).